The sequence spans 117 residues: Histone H1-like protein HC1 (117 aa).

The segment at 57-117 is disordered; sequence EKSGLMTRKP…KSSKSRYLRK (61 aa). Residues 66–81 show a composition bias toward basic residues; the sequence is PATKAKKAAATKKAAP. Positions 82-94 are enriched in low complexity; sequence KPKIQAKAAPKAK. Positions 95–117 are enriched in basic residues; sequence ATTKKTPAKAKAKKSSKSRYLRK.

Belongs to the histone H1/H5 family. HCT subfamily.

Its function is as follows. Might have a role analogous to that of eukaryotic histone proteins. This chain is Histone H1-like protein HC1 (hctA), found in Chlamydia psittaci (Chlamydophila psittaci).